The chain runs to 737 residues: Envelope glycoprotein H (737 aa).

A signal peptide spans 1–25; sequence MLIRRRALWLTIPILIIMTSHKIMC. Residues 26 to 702 are Virion surface-facing; sequence AFDLSHVHSE…NFFLFSSKSP (677 aa). 10 N-linked (GlcNAc...) asparagine; by host glycosylation sites follow: N62, N212, N365, N412, N448, N465, N544, N569, N603, and N683. The interval 191–253 is interaction with gL; sequence GSVTLFGHIT…MMMYDDFEII (63 aa). Residues 703–723 traverse the membrane as a helical segment; sequence GAIVLYIIIISLIVWTLYEII. Topologically, residues 724-737 are intravirion; sequence KLFCYKRQWQYQKL.

This sequence belongs to the herpesviridae glycoprotein H family. As to quaternary structure, interacts with glycoprotein L (gL); this interaction is necessary for the correct processing and cell surface expression of gH. The heterodimer gH/gL seems to interact with gB trimers during fusion. Post-translationally, N-glycosylated, O-glycosylated, and sialylated.

The protein localises to the virion membrane. The protein resides in the host cell membrane. It localises to the host endosome membrane. Its function is as follows. The heterodimer glycoprotein H-glycoprotein L is required for the fusion of viral and plasma membranes leading to virus entry into the host cell. Following initial binding to host receptor, membrane fusion is mediated by the fusion machinery composed of gB and the heterodimer gH/gL. May also be involved in the fusion between the virion envelope and the outer nuclear membrane during virion morphogenesis. This chain is Envelope glycoprotein H, found in Elephantid herpesvirus 1 (isolate Asian elephant/Berlin/Kiba/1998) (EIHV-1).